The chain runs to 116 residues: IGNFVEVKKSTFGKGSKAPHLSYIGDAEVGADVNLGCGSITVNYDGVNKHMTKIENGAFIGCNVNLIAPVTVGQGAYVAAGSTITNDVPGRALAIARARQVNKENYVDRLPGKKKS.

An acetyl-CoA-binding site is contributed by lysine 8. Histidine 20 (proton acceptor) is an active-site residue. Residues tyrosine 23, asparagine 34, 43-44 (NY), alanine 80, and arginine 97 contribute to the acetyl-CoA site.

This sequence in the N-terminal section; belongs to the N-acetylglucosamine-1-phosphate uridyltransferase family. In the C-terminal section; belongs to the transferase hexapeptide repeat family. Mg(2+) serves as cofactor.

It is found in the cytoplasm. The enzyme catalyses alpha-D-glucosamine 1-phosphate + acetyl-CoA = N-acetyl-alpha-D-glucosamine 1-phosphate + CoA + H(+). It catalyses the reaction N-acetyl-alpha-D-glucosamine 1-phosphate + UTP + H(+) = UDP-N-acetyl-alpha-D-glucosamine + diphosphate. The protein operates within nucleotide-sugar biosynthesis; UDP-N-acetyl-alpha-D-glucosamine biosynthesis; N-acetyl-alpha-D-glucosamine 1-phosphate from alpha-D-glucosamine 6-phosphate (route II): step 2/2. Its pathway is nucleotide-sugar biosynthesis; UDP-N-acetyl-alpha-D-glucosamine biosynthesis; UDP-N-acetyl-alpha-D-glucosamine from N-acetyl-alpha-D-glucosamine 1-phosphate: step 1/1. It participates in bacterial outer membrane biogenesis; LPS lipid A biosynthesis. Catalyzes the last two sequential reactions in the de novo biosynthetic pathway for UDP-N-acetylglucosamine (UDP-GlcNAc). The C-terminal domain catalyzes the transfer of acetyl group from acetyl coenzyme A to glucosamine-1-phosphate (GlcN-1-P) to produce N-acetylglucosamine-1-phosphate (GlcNAc-1-P), which is converted into UDP-GlcNAc by the transfer of uridine 5-monophosphate (from uridine 5-triphosphate), a reaction catalyzed by the N-terminal domain. The protein is Bifunctional protein GlmU (glmU) of Bacillus caldolyticus.